The chain runs to 550 residues: Keratin, type II cytoskeletal 74 (550 aa).

The segment at 1–140 (MSRQLNIKSG…DPEIQKVRAQ (140 aa)) is head. The interval 141–176 (EREQIMALNNKFASFIDKVRFLEQQNQVLGTKWELL) is coil 1A. Positions 141 to 468 (EREQIMALNN…KLLEGEECWM (328 aa)) constitute an IF rod domain. The interval 177–195 (QQMDLNNCRKNLEPILEGY) is linker 1. The coil 1B stretch occupies residues 196–287 (IGNLRKQLEM…CLYDAEVAQI (92 aa)). Residues 288 to 311 (QTHTSETSVILSMDNNRYLDLDSI) are linker 12. Positions 312 to 464 (IAEVRAQYED…ATYSKLLEGE (153 aa)) are coil 2. Positions 465-550 (ECWMSGENPS…VSSRARKAAR (86 aa)) are tail. The segment at 491 to 550 (HPGSSASTDLGASTMASTGTSSSSSTQSGQTRAKGARVGDPKDSQDKSTPVSSRARKAAR) is disordered. Positions 502–521 (ASTMASTGTSSSSSTQSGQT) are enriched in low complexity. The segment covering 527–536 (RVGDPKDSQD) has biased composition (basic and acidic residues).

The protein belongs to the intermediate filament family. Heterotetramer of two type I and two type II keratins.

Functionally, has a role in hair formation. Specific component of keratin intermediate filaments in the inner root sheath (IRS) of the hair follicle. The chain is Keratin, type II cytoskeletal 74 (KRT74) from Bos taurus (Bovine).